Reading from the N-terminus, the 200-residue chain is 5'(3')-deoxyribonucleotidase, cytosolic type (200 aa).

D12 serves as the catalytic Nucleophile. 2 residues coordinate Mg(2+): D12 and D14. The active-site Proton donor is the D14. Positions 20, 46, 67, and 101 each coordinate substrate. Phosphothreonine is present on T102. K136 contacts substrate. Position 147 (D147) interacts with Mg(2+). S184 is subject to Phosphoserine.

This sequence belongs to the 5'(3')-deoxyribonucleotidase family. As to quaternary structure, homodimer. Mg(2+) serves as cofactor.

It localises to the cytoplasm. Dephosphorylates the 5' and 2'(3')-phosphates of deoxyribonucleotides, with a preference for dUMP and dTMP, intermediate activity towards dGMP, and low activity towards dCMP and dAMP. The sequence is that of 5'(3')-deoxyribonucleotidase, cytosolic type (Nt5c) from Mus musculus (Mouse).